Consider the following 271-residue polypeptide: Imidazole glycerol phosphate synthase subunit HisF (271 aa).

Residues Asp12 and Asp131 contribute to the active site.

The protein belongs to the HisA/HisF family. Heterodimer of HisH and HisF.

The protein resides in the cytoplasm. The catalysed reaction is 5-[(5-phospho-1-deoxy-D-ribulos-1-ylimino)methylamino]-1-(5-phospho-beta-D-ribosyl)imidazole-4-carboxamide + L-glutamine = D-erythro-1-(imidazol-4-yl)glycerol 3-phosphate + 5-amino-1-(5-phospho-beta-D-ribosyl)imidazole-4-carboxamide + L-glutamate + H(+). Its pathway is amino-acid biosynthesis; L-histidine biosynthesis; L-histidine from 5-phospho-alpha-D-ribose 1-diphosphate: step 5/9. IGPS catalyzes the conversion of PRFAR and glutamine to IGP, AICAR and glutamate. The HisF subunit catalyzes the cyclization activity that produces IGP and AICAR from PRFAR using the ammonia provided by the HisH subunit. The sequence is that of Imidazole glycerol phosphate synthase subunit HisF from Methanospirillum hungatei JF-1 (strain ATCC 27890 / DSM 864 / NBRC 100397 / JF-1).